The primary structure comprises 449 residues: Phosphoglucosamine mutase (449 aa).

Serine 104 acts as the Phosphoserine intermediate in catalysis. Mg(2+)-binding residues include serine 104, aspartate 243, aspartate 245, and aspartate 247. Serine 104 bears the Phosphoserine mark.

The protein belongs to the phosphohexose mutase family. Requires Mg(2+) as cofactor. Activated by phosphorylation.

The catalysed reaction is alpha-D-glucosamine 1-phosphate = D-glucosamine 6-phosphate. Functionally, catalyzes the conversion of glucosamine-6-phosphate to glucosamine-1-phosphate. In Xanthomonas euvesicatoria pv. vesicatoria (strain 85-10) (Xanthomonas campestris pv. vesicatoria), this protein is Phosphoglucosamine mutase.